The sequence spans 169 residues: S-ribosylhomocysteine lyase (169 aa).

Positions 54, 58, and 128 each coordinate Fe cation.

This sequence belongs to the LuxS family. Homodimer. The cofactor is Fe cation.

The catalysed reaction is S-(5-deoxy-D-ribos-5-yl)-L-homocysteine = (S)-4,5-dihydroxypentane-2,3-dione + L-homocysteine. In terms of biological role, involved in the synthesis of autoinducer 2 (AI-2) which is secreted by bacteria and is used to communicate both the cell density and the metabolic potential of the environment. The regulation of gene expression in response to changes in cell density is called quorum sensing. Catalyzes the transformation of S-ribosylhomocysteine (RHC) to homocysteine (HC) and 4,5-dihydroxy-2,3-pentadione (DPD). This Shewanella sp. (strain ANA-3) protein is S-ribosylhomocysteine lyase.